We begin with the raw amino-acid sequence, 183 residues long: Holliday junction branch migration complex subunit RuvA (183 aa).

The segment at 1–63 (MIVGLIGVVE…EDAHLLYGFL (63 aa)) is domain I. Residues 64-139 (EEGEKILFER…FFIQDENRPA (76 aa)) form a domain II region. Position 139 (alanine 139) is a region of interest, flexible linker. Positions 139 to 183 (ARNEVFLALESLGFKSAEINQVLKTLKPNLSIEAAIKEALQQLRS) are domain III.

The protein belongs to the RuvA family. As to quaternary structure, homotetramer. Forms an RuvA(8)-RuvB(12)-Holliday junction (HJ) complex. HJ DNA is sandwiched between 2 RuvA tetramers; dsDNA enters through RuvA and exits via RuvB. An RuvB hexamer assembles on each DNA strand where it exits the tetramer. Each RuvB hexamer is contacted by two RuvA subunits (via domain III) on 2 adjacent RuvB subunits; this complex drives branch migration. In the full resolvosome a probable DNA-RuvA(4)-RuvB(12)-RuvC(2) complex forms which resolves the HJ.

It is found in the cytoplasm. In terms of biological role, the RuvA-RuvB-RuvC complex processes Holliday junction (HJ) DNA during genetic recombination and DNA repair, while the RuvA-RuvB complex plays an important role in the rescue of blocked DNA replication forks via replication fork reversal (RFR). RuvA specifically binds to HJ cruciform DNA, conferring on it an open structure. The RuvB hexamer acts as an ATP-dependent pump, pulling dsDNA into and through the RuvAB complex. HJ branch migration allows RuvC to scan DNA until it finds its consensus sequence, where it cleaves and resolves the cruciform DNA. The sequence is that of Holliday junction branch migration complex subunit RuvA from Helicobacter pylori (strain ATCC 700392 / 26695) (Campylobacter pylori).